Consider the following 126-residue polypeptide: Autophagy-related protein 8-like protein DDB_G0290491 (126 aa).

The Phosphatidylethanolamine amidated glycine moiety is linked to residue G123. The propeptide at 124–126 is removed in mature form; sequence SDI.

The protein belongs to the ATG8 family.

It is found in the membrane. This Dictyostelium discoideum (Social amoeba) protein is Autophagy-related protein 8-like protein DDB_G0290491.